The primary structure comprises 102 residues: NADH-quinone oxidoreductase subunit K (102 aa).

The next 3 helical transmembrane spans lie at 6-26 (MHHG…GILV), 30-50 (LIFI…AFVV), and 64-84 (FIFI…LLLL).

Belongs to the complex I subunit 4L family. In terms of assembly, NDH-1 is composed of 14 different subunits. Subunits NuoA, H, J, K, L, M, N constitute the membrane sector of the complex.

It localises to the cell inner membrane. It catalyses the reaction a quinone + NADH + 5 H(+)(in) = a quinol + NAD(+) + 4 H(+)(out). In terms of biological role, NDH-1 shuttles electrons from NADH, via FMN and iron-sulfur (Fe-S) centers, to quinones in the respiratory chain. The immediate electron acceptor for the enzyme in this species is believed to be ubiquinone. Couples the redox reaction to proton translocation (for every two electrons transferred, four hydrogen ions are translocated across the cytoplasmic membrane), and thus conserves the redox energy in a proton gradient. This is NADH-quinone oxidoreductase subunit K from Nitrosospira multiformis (strain ATCC 25196 / NCIMB 11849 / C 71).